The chain runs to 1029 residues: MYQPTISHFFKSSQPSSQTDTRQDEDQRLDIESHEQRGGANMNKDELINILGSDSESDQDLDEDLDQDQNNNQDQDQEQDRDLASKANNGRSTLSAERIERRPDFNEKLKTIMRKRNAGSMINTGSDDENDDNDDVKSTKRTKANNKKLTELDQQFKELKLKHMDTILCVRVGYKYKFFAKDAEIVSNILQIKLVPGKKTLDESDPNDRNYRKFQYCSIPDTRLHVHLQRLVFFNYKVAVVEQTETSALKKNNNSGSLFTREIKNIFTKVSYGINETFDKSEDRILGDLTSVWAISINETSKMRKVNLISVQLNSGEIVHDQFSDDILLNVNLEARIRYLNPTEIITEEELPPSIRTIFTKLNQDIQFYQSHKEACPNLFDALQGLDLNNELKRLLSVLHSYLSTFENTKVLYFASNYSSFTAKNFMVLPRNTIESLEIFENSTTNKTNGSLLWVMDHTRTQFGYRLLRKWISKPLIDLKSILDRQDAITCIMKEVHSIFFESFNELLRKSIDLERALNRIAYGSTSRKEVYFFLKQIATFASLFKSHHTFIHDQLHKENSALRKTSCLLFNILQNLDAFFSATDLPLFLQMINVDAALDKDSHKNVIEFFNLNKYDFPEGLLHKYRDIEEVKTELDDELQNIKRVLKRPTLSYKDTKDYLIEVRNTQAKTVPSNWVKVNSTKAVSRFRTPKTEELVGKLLYHNDLLNLLAEDEFKRFLQRIVDRYAEIKTCINNLATYDCILSLAATSSNVNYVKPKLTELHQKVKVKNGRNPIIESLDVNYVPNDVLMSSNSGKINIITGPNMGGKSSYIRQVALLVIMTQIGCYIPADSAEMSICDRIFTRIGSHDDLLNAKSTFQVEMSEVLHILNSSTPRSLLLLDEVGRGTGTHDGLSISFAILNYFVYLADNCPLVLFITHYSALCQIDSKLIANYHMSYIEKHQPGEKWTNVIFLYKLVLGQAHNSYGFNVAKLSNIPTEIINRAFEVSEEKILSSKHHNFLEIMKALKRVNERKLNKEALKKIQAFIEDI.

Residues 1 to 20 (MYQPTISHFFKSSQPSSQTD) show a composition bias toward polar residues. The interval 1–142 (MYQPTISHFF…NDDVKSTKRT (142 aa)) is disordered. Basic and acidic residues predominate over residues 21–47 (TRQDEDQRLDIESHEQRGGANMNKDEL). The segment covering 55–67 (SESDQDLDEDLDQ) has biased composition (acidic residues). Positions 86 to 95 (KANNGRSTLS) are enriched in polar residues. Over residues 97-110 (ERIERRPDFNEKLK) the composition is skewed to basic and acidic residues. A mispair-binding domain region spans residues 143-270 (KANNKKLTEL…REIKNIFTKV (128 aa)). 802–809 (GPNMGGKS) contacts ATP.

Belongs to the DNA mismatch repair MutS family. MSH3 subfamily. Heterodimer consisting of MSH2-MSH3 (MutS beta). Forms a ternary complex with MutL alpha (MLH1-PMS1).

The protein resides in the nucleus. In terms of biological role, component of the post-replicative DNA mismatch repair system (MMR). Heterodimerizes with MSH2 to form MutS beta, which binds to DNA mismatches thereby initiating DNA repair. MSH3 provides substrate-binding and substrate specificity to the complex. When bound, the MutS beta heterodimer bends the DNA helix and shields approximately 20 base pairs. Acts mainly to repair insertion-deletion loops (IDLs) from 2 to 13 nucleotides in size, but can also repair base-base and single insertion-deletion mismatches that occur during replication. After mismatch binding, forms a ternary complex with the MutL alpha heterodimer, which is thought to be responsible for directing the downstream MMR events, including strand discrimination, excision, and resynthesis. ATP binding and hydrolysis play a pivotal role in mismatch repair functions. The polypeptide is DNA mismatch repair protein MSH3 (MSH3) (Kluyveromyces lactis (strain ATCC 8585 / CBS 2359 / DSM 70799 / NBRC 1267 / NRRL Y-1140 / WM37) (Yeast)).